Consider the following 391-residue polypeptide: Processive diacylglycerol beta-glucosyltransferase (391 aa).

It belongs to the glycosyltransferase 28 family. UgtP subfamily.

It localises to the cell membrane. The enzyme catalyses a 1,2-diacyl-3-O-(beta-D-glucopyranosyl)-sn-glycerol + UDP-alpha-D-glucose = a 1,2-diacyl-3-O-(beta-D-Glc-(1-&gt;6)-beta-D-Glc)-sn-glycerol + UDP + H(+). The catalysed reaction is a 1,2-diacyl-sn-glycerol + UDP-alpha-D-glucose = a 1,2-diacyl-3-O-(beta-D-glucopyranosyl)-sn-glycerol + UDP + H(+). Its pathway is glycolipid metabolism; diglucosyl-diacylglycerol biosynthesis. In terms of biological role, processive glucosyltransferase involved in the biosynthesis of both the bilayer- and non-bilayer-forming membrane glucolipids. Is able to successively transfer two glucosyl residues to diacylglycerol (DAG), thereby catalyzing the formation of beta-monoglucosyl-DAG (3-O-(beta-D-glucopyranosyl)-1,2-diacyl-sn-glycerol) and beta-diglucosyl-DAG (3-O-(beta-D-glucopyranosyl-beta-(1-&gt;6)-D-glucopyranosyl)-1,2-diacyl-sn-glycerol). Beta-diglucosyl-DAG is the predominant glycolipid found in Bacillales and is also used as a membrane anchor for lipoteichoic acid (LTA). In Staphylococcus saprophyticus subsp. saprophyticus (strain ATCC 15305 / DSM 20229 / NCIMB 8711 / NCTC 7292 / S-41), this protein is Processive diacylglycerol beta-glucosyltransferase.